A 620-amino-acid polypeptide reads, in one-letter code: Protein phosphatase 2C-like domain-containing protein 1 (620 aa).

A PPM-type phosphatase domain is found at 173-611 (GIAICSNNNS…DSITVMVMFL (439 aa)).

It belongs to the PP2C family.

This chain is Protein phosphatase 2C-like domain-containing protein 1 (Pp2d1), found in Mus musculus (Mouse).